We begin with the raw amino-acid sequence, 324 residues long: ATP synthase mitochondrial F1 complex assembly factor 1 (324 aa).

Residues 1-54 constitute a mitochondrion transit peptide; sequence MAAVVSAAGGACPAVLQVAGLYRGLCAVRSRALGLGFVSPAQLRVFPVRRGSGL.

The protein belongs to the ATP11 family. Interacts with ATP5F1B; involved in the assembly of the F1 component of the mitochondrial ATP synthase (ATPase). In terms of tissue distribution, widely expressed but with low level.

The protein localises to the mitochondrion inner membrane. Functionally, has a complex stabilizing activity in the assembly of the mitochondrial F1-F0 complex. The polypeptide is ATP synthase mitochondrial F1 complex assembly factor 1 (Mus musculus (Mouse)).